The primary structure comprises 247 residues: Probable transcriptional regulatory protein Dvul_0986 (247 aa).

Residues 1–22 (MAGHSKWANIQHRKGRQDAKRG) form a disordered region.

It belongs to the TACO1 family.

It localises to the cytoplasm. This chain is Probable transcriptional regulatory protein Dvul_0986, found in Nitratidesulfovibrio vulgaris (strain DP4) (Desulfovibrio vulgaris).